Reading from the N-terminus, the 493-residue chain is ATP synthase subunit beta, chloroplastic (493 aa).

170-177 (GGAGVGKT) contributes to the ATP binding site.

The protein belongs to the ATPase alpha/beta chains family. As to quaternary structure, F-type ATPases have 2 components, CF(1) - the catalytic core - and CF(0) - the membrane proton channel. CF(1) has five subunits: alpha(3), beta(3), gamma(1), delta(1), epsilon(1). CF(0) has four main subunits: a(1), b(1), b'(1) and c(9-12).

It localises to the plastid. Its subcellular location is the chloroplast thylakoid membrane. It carries out the reaction ATP + H2O + 4 H(+)(in) = ADP + phosphate + 5 H(+)(out). Its function is as follows. Produces ATP from ADP in the presence of a proton gradient across the membrane. The catalytic sites are hosted primarily by the beta subunits. The sequence is that of ATP synthase subunit beta, chloroplastic from Lachenalia pusilla (Cape cowslips).